Here is a 199-residue protein sequence, read N- to C-terminus: Putative DNA-directed RNA polymerase subunit L376 (199 aa).

It belongs to the eukaryotic RPB7/RPC8 RNA polymerase subunit family.

It is found in the virion. It carries out the reaction RNA(n) + a ribonucleoside 5'-triphosphate = RNA(n+1) + diphosphate. The chain is Putative DNA-directed RNA polymerase subunit L376 from Acanthamoeba polyphaga (Amoeba).